Here is a 426-residue protein sequence, read N- to C-terminus: F-box protein At2g15640 (426 aa).

The F-box domain maps to 1–48 (MNPSTITNDLTVEILSRLPAKSVARFHCVSKQWGSIFGSPYFKELFLT).

In Arabidopsis thaliana (Mouse-ear cress), this protein is F-box protein At2g15640.